A 122-amino-acid polypeptide reads, in one-letter code: Allatotropin (122 aa).

Residues 1 to 23 form the signal peptide; the sequence is MRVILAITLLFVAGSFIATASKG. The propeptide occupies 24–40; the sequence is RNYPRFFKHRMKLREIR. The residue at position 53 (Phe-53) is a Phenylalanine amide. Positions 57–122 are excised as a propeptide; that stretch reads ESPAERIPDL…GDDSKKGTIA (66 aa).

In terms of tissue distribution, expressed in brain and ventral ganglia but not in the retrocerebral complex (at protein level).

Its subcellular location is the secreted. Functionally, neuropeptide stimulator of juvenile hormone synthesis. This is Allatotropin from Camponotus floridanus (Florida carpenter ant).